A 274-amino-acid chain; its full sequence is MTLQEDIIRQLGVKAVIDPKQEIRQSVDFLKAYLLKHPFLKTYVLGISGGQDSSLAGKLAQMAIEELRAETGDEQYQFIAVRLPYGVQADEADAQKALAFIQPDQALTVNIKEAVDGQLRALETAGLEISDFNKGNIKARQRMISQYAIAGQTAGAVIGTDHAAENVTGFFTKFGDGGADILPLFRLTKRQGKALLKALKADPSLYEKVPTADLEDKKPGLADEVALGVSYQEIDDYLEGHTISAEAQARIEDWWHKGQHKRHLPITIFDDFWK.

46 to 53 (GISGGQDS) serves as a coordination point for ATP. Aspartate 52 provides a ligand contact to Mg(2+). Arginine 140 provides a ligand contact to deamido-NAD(+). Threonine 160 lines the ATP pocket. A Mg(2+)-binding site is contributed by glutamate 165. Residues lysine 173 and aspartate 180 each contribute to the deamido-NAD(+) site. 2 residues coordinate ATP: lysine 189 and threonine 211. 260-261 (HK) contacts deamido-NAD(+).

This sequence belongs to the NAD synthetase family. As to quaternary structure, homodimer.

It catalyses the reaction deamido-NAD(+) + NH4(+) + ATP = AMP + diphosphate + NAD(+) + H(+). It functions in the pathway cofactor biosynthesis; NAD(+) biosynthesis; NAD(+) from deamido-NAD(+) (ammonia route): step 1/1. Catalyzes the ATP-dependent amidation of deamido-NAD to form NAD. Uses ammonia as a nitrogen source. The chain is NH(3)-dependent NAD(+) synthetase from Streptococcus equi subsp. zooepidemicus (strain MGCS10565).